The chain runs to 324 residues: COP9 signalosome complex subunit 6 (324 aa).

The MPN domain occupies 38-171 (VALHPLVILN…VSVFESVIDI (134 aa)).

It belongs to the peptidase M67A family. CSN6 subfamily. In terms of assembly, component of the CSN complex, composed of COPS1/GPS1, COPS2, COPS3, COPS4, COPS5, COPS6, COPS7 (COPS7A or COPS7B), COPS8 and COPS9. In the complex, it probably interacts directly with COPS2, COPS4, COPS5, COPS7 (COPS7A or COPS7B) and COPS9. Interacts with the translation initiation factor EIF3S6. Interacts weakly with RBX1. Directly interacts with COP1 and 14-3-3 protein sigma/SFN. Interacts with ERCC6.

It localises to the cytoplasm. The protein localises to the nucleus. In terms of biological role, component of the COP9 signalosome complex (CSN), a complex involved in various cellular and developmental processes. The CSN complex is an essential regulator of the ubiquitin (Ubl) conjugation pathway by mediating the deneddylation of the cullin subunits of SCF-type E3 ligase complexes, leading to decrease the Ubl ligase activity of SCF-type complexes such as SCF, CSA or DDB2. The complex is also involved in phosphorylation of p53/TP53, c-jun/JUN, IkappaBalpha/NFKBIA, ITPK1 and IRF8, possibly via its association with CK2 and PKD kinases. CSN-dependent phosphorylation of TP53 and JUN promotes and protects degradation by the Ubl system, respectively. Has some glucocorticoid receptor-responsive activity. Stabilizes COP1 through reducing COP1 auto-ubiquitination and decelerating COP1 turnover rate, hence regulates the ubiquitination of COP1 targets, including SFN. The polypeptide is COP9 signalosome complex subunit 6 (Cops6) (Mus musculus (Mouse)).